The primary structure comprises 130 residues: Small ribosomal subunit protein uS11c (130 aa).

Belongs to the universal ribosomal protein uS11 family. In terms of assembly, part of the 30S ribosomal subunit.

Its subcellular location is the plastid. The protein localises to the chloroplast. This Chlorella vulgaris (Green alga) protein is Small ribosomal subunit protein uS11c.